Reading from the N-terminus, the 759-residue chain is Subtilisin-like protease SBT3.10 (759 aa).

Residues 1 to 25 (MSKTIILLAFFLSIVLNVQISFVVA) form the signal peptide. Positions 26–108 (ESKVYVVYLG…VIPNTLYEMT (83 aa)) are cleaved as a propeptide — activation peptide. The Inhibitor I9 domain occupies 29 to 106 (VYVVYLGEKE…VQVIPNTLYE (78 aa)). A Peptidase S8 domain is found at 112–606 (TWDYLGVSPG…GGLINPEKAV (495 aa)). Asp-142 (charge relay system) is an active-site residue. Residues Asn-175 and Asn-202 are each glycosylated (N-linked (GlcNAc...) asparagine). His-218 (charge relay system) is an active-site residue. Residues Asn-233 and Asn-361 are each glycosylated (N-linked (GlcNAc...) asparagine). The 75-residue stretch at 390–464 (DCEKLSANPK…ELGTDILFYI (75 aa)) folds into the PA domain. Ser-537 serves as the catalytic Charge relay system.

It belongs to the peptidase S8 family.

Its subcellular location is the secreted. This chain is Subtilisin-like protease SBT3.10, found in Arabidopsis thaliana (Mouse-ear cress).